A 462-amino-acid chain; its full sequence is GTPase Der (462 aa).

EngA-type G domains lie at 3–166 (PVIA…ITEM) and 175–348 (IKIA…HSAI). GTP contacts are provided by residues 9-16 (GRPNVGKS), 56-60 (DTGGI), 118-121 (NKTD), 181-188 (GRPNVGKS), 228-232 (DTAGV), and 293-296 (NKWD). Residues 349–433 (QSFSTPKLTR…PLKIEFKGGQ (85 aa)) form the KH-like domain.

The protein belongs to the TRAFAC class TrmE-Era-EngA-EngB-Septin-like GTPase superfamily. EngA (Der) GTPase family. Associates with the 50S ribosomal subunit.

GTPase that plays an essential role in the late steps of ribosome biogenesis. In Legionella pneumophila (strain Lens), this protein is GTPase Der.